The chain runs to 306 residues: Acetaldehyde dehydrogenase 3 (306 aa).

Cysteine 131 functions as the Acyl-thioester intermediate in the catalytic mechanism. NAD(+)-binding positions include 162-170 (SVGPGTRKN) and asparagine 273.

The protein belongs to the acetaldehyde dehydrogenase family.

The enzyme catalyses acetaldehyde + NAD(+) + CoA = acetyl-CoA + NADH + H(+). This is Acetaldehyde dehydrogenase 3 from Burkholderia lata (strain ATCC 17760 / DSM 23089 / LMG 22485 / NCIMB 9086 / R18194 / 383).